The sequence spans 190 residues: dTTP/UTP pyrophosphatase (190 aa).

Aspartate 69 acts as the Proton acceptor in catalysis.

This sequence belongs to the Maf family. YhdE subfamily. The cofactor is a divalent metal cation.

The protein localises to the cytoplasm. It catalyses the reaction dTTP + H2O = dTMP + diphosphate + H(+). The enzyme catalyses UTP + H2O = UMP + diphosphate + H(+). In terms of biological role, nucleoside triphosphate pyrophosphatase that hydrolyzes dTTP and UTP. May have a dual role in cell division arrest and in preventing the incorporation of modified nucleotides into cellular nucleic acids. In Sphingopyxis alaskensis (strain DSM 13593 / LMG 18877 / RB2256) (Sphingomonas alaskensis), this protein is dTTP/UTP pyrophosphatase.